The primary structure comprises 232 residues: Lipid A 1-phosphatase (232 aa).

6 helical membrane-spanning segments follow: residues 10 to 30, 42 to 62, 80 to 100, 136 to 156, 160 to 180, and 183 to 203; these read LFIT…PVGA, ELLT…LLFF, ALYV…SGLL, FPSG…LLFP, VAFI…GAHY, and DVIA…IVYA.

The protein belongs to the lipid A LpxE 1-phosphatase family.

The protein localises to the cell inner membrane. It functions in the pathway bacterial outer membrane biogenesis; LPS lipid A biosynthesis. Probably removes the 1-phosphate moiety from lipid A species. Does not seem to act on other membrane components, nor does it dephosphorylate the 4'-phosphate group of lipid A and/or lipid A precursors. In Rhizobium etli (strain ATCC 51251 / DSM 11541 / JCM 21823 / NBRC 15573 / CFN 42), this protein is Lipid A 1-phosphatase.